A 734-amino-acid polypeptide reads, in one-letter code: Photosystem I P700 chlorophyll a apoprotein A2 (734 aa).

A run of 8 helical transmembrane segments spans residues 46–69 (IFASHFGQLAIIFLWTSGNLFHVA), 135–158 (LYTGALFLLFLSALSLIAGWLHLQ), 175–199 (LNHHLSGLFGVSSLAWTGHLVHVAI), 273–291 (IAHHHLAIAILFLIAGHMY), 330–353 (IHFQLGLALASLGVITSLVAQHMY), 369–395 (AALYTHHQYIAGFIMTGAFAHGAIFFI), 417–439 (AIISHLSWASLFLGFHTLGLYVH), and 517–535 (FLVHHAIALGLHTTTLILV). 2 residues coordinate [4Fe-4S] cluster: Cys-559 and Cys-568. The next 2 helical transmembrane spans lie at 575-596 (AFYLAVFWMLNTIGWVTFYWHW) and 643-665 (LSVWAWMFLFGHLVWATGFMFLI). Residues His-654, Met-662, and Tyr-670 each contribute to the chlorophyll a site. Trp-671 lines the phylloquinone pocket. The helical transmembrane segment at 707–727 (LVGLAHFSVGYIFTYAAFLIA) threads the bilayer.

The protein belongs to the PsaA/PsaB family. The PsaA/B heterodimer binds the P700 chlorophyll special pair and subsequent electron acceptors. PSI consists of a core antenna complex that captures photons, and an electron transfer chain that converts photonic excitation into a charge separation. The eukaryotic PSI reaction center is composed of at least 11 subunits. It depends on P700 is a chlorophyll a/chlorophyll a' dimer, A0 is one or more chlorophyll a, A1 is one or both phylloquinones and FX is a shared 4Fe-4S iron-sulfur center. as a cofactor.

The protein resides in the plastid. It localises to the chloroplast thylakoid membrane. It catalyses the reaction reduced [plastocyanin] + hnu + oxidized [2Fe-2S]-[ferredoxin] = oxidized [plastocyanin] + reduced [2Fe-2S]-[ferredoxin]. Functionally, psaA and PsaB bind P700, the primary electron donor of photosystem I (PSI), as well as the electron acceptors A0, A1 and FX. PSI is a plastocyanin-ferredoxin oxidoreductase, converting photonic excitation into a charge separation, which transfers an electron from the donor P700 chlorophyll pair to the spectroscopically characterized acceptors A0, A1, FX, FA and FB in turn. Oxidized P700 is reduced on the lumenal side of the thylakoid membrane by plastocyanin. The chain is Photosystem I P700 chlorophyll a apoprotein A2 from Gossypium hirsutum (Upland cotton).